The chain runs to 256 residues: Neuroendocrine secretory protein 55 (256 aa).

Residues 1–46 (MDRRSRAHQWRRARHNYNDLCPPIGRRAATALLWLSCSIALLRALA) form the signal peptide. The tract at residues 61–256 (SFLNAHHRSA…RKGPIPIRRH (196 aa)) is disordered. The segment covering 86-103 (ESDHEHEEAEPELARPEC) has biased composition (basic and acidic residues). 2 stretches are compositionally biased toward acidic residues: residues 104–139 (LEYD…ETEP) and 206–216 (LDEDPRDPEES). Residues 225-236 (QPRRCKTRRPAR) show a composition bias toward basic residues.

This sequence belongs to the NESP55 family. Binds keratan sulfate chains. Post-translationally, may be proteolytically processed to give rise to a number of active peptides.

The protein resides in the cytoplasmic vesicle. Its subcellular location is the secretory vesicle. It localises to the synaptic vesicle. It is found in the secreted. The protein is Neuroendocrine secretory protein 55 of Rattus norvegicus (Rat).